The following is a 476-amino-acid chain: Sulfate adenylyltransferase subunit 1 (476 aa).

In terms of domain architecture, tr-type G spans 24 to 243; the sequence is KSLLRFLTCG…VDVEKEKEAG (220 aa). The segment at 33–40 is G1; that stretch reads GSVDDGKS. 33 to 40 provides a ligand contact to GTP; that stretch reads GSVDDGKS. The segment at 91–95 is G2; the sequence is GITID. Residues 112–115 are G3; that stretch reads DTPG. GTP contacts are provided by residues 112-116 and 167-170; these read DTPGH and NKMD. The G4 stretch occupies residues 167 to 170; the sequence is NKMD. The G5 stretch occupies residues 205 to 207; that stretch reads SAL.

It belongs to the TRAFAC class translation factor GTPase superfamily. Classic translation factor GTPase family. CysN/NodQ subfamily. In terms of assembly, heterodimer composed of CysD, the smaller subunit, and CysN.

It catalyses the reaction sulfate + ATP + H(+) = adenosine 5'-phosphosulfate + diphosphate. It participates in sulfur metabolism; hydrogen sulfide biosynthesis; sulfite from sulfate: step 1/3. With CysD forms the ATP sulfurylase (ATPS) that catalyzes the adenylation of sulfate producing adenosine 5'-phosphosulfate (APS) and diphosphate, the first enzymatic step in sulfur assimilation pathway. APS synthesis involves the formation of a high-energy phosphoric-sulfuric acid anhydride bond driven by GTP hydrolysis by CysN coupled to ATP hydrolysis by CysD. The sequence is that of Sulfate adenylyltransferase subunit 1 from Vibrio vulnificus (strain YJ016).